A 239-amino-acid polypeptide reads, in one-letter code: MNTTSTETRKAMAAAAAVALVRPGMVIGLGFGSTAAYATRMIAERLHQGDLNDIVGVPCAEGTAQLARELGIPLTTLDEVAAVDLTIDGADEVDPQLSLIKGGGGALLREKMVAQASRRVAIIVDDSKLSPALGTRFALPLEVVDFGWRATARWLEAQGGTVQLRLRADGQPFRTDQGNLILDWKCGPLNDPAALAAQLSARAGIVEHGLFIGLATDLFVAGPDGVQHVTTSDCGTIAW.

Substrate is bound by residues 31–34 (FGST), 88–91 (DGAD), and 101–104 (KGGG). E110 serves as the catalytic Proton acceptor. A substrate-binding site is contributed by K128.

This sequence belongs to the ribose 5-phosphate isomerase family. Homodimer.

It catalyses the reaction aldehydo-D-ribose 5-phosphate = D-ribulose 5-phosphate. It functions in the pathway carbohydrate degradation; pentose phosphate pathway; D-ribose 5-phosphate from D-ribulose 5-phosphate (non-oxidative stage): step 1/1. Its function is as follows. Catalyzes the reversible conversion of ribose-5-phosphate to ribulose 5-phosphate. The chain is Ribose-5-phosphate isomerase A from Chloroflexus aurantiacus (strain ATCC 29366 / DSM 635 / J-10-fl).